We begin with the raw amino-acid sequence, 140 residues long: Large ribosomal subunit protein uL11 (140 aa).

It belongs to the universal ribosomal protein uL11 family. In terms of assembly, part of the ribosomal stalk of the 50S ribosomal subunit. Interacts with L10 and the large rRNA to form the base of the stalk. L10 forms an elongated spine to which L12 dimers bind in a sequential fashion forming a multimeric L10(L12)X complex. In terms of processing, one or more lysine residues are methylated.

Functionally, forms part of the ribosomal stalk which helps the ribosome interact with GTP-bound translation factors. The polypeptide is Large ribosomal subunit protein uL11 (Gemmatimonas aurantiaca (strain DSM 14586 / JCM 11422 / NBRC 100505 / T-27)).